Consider the following 454-residue polypeptide: tRNA modification GTPase MnmE (454 aa).

Residues arginine 23, glutamate 80, and lysine 120 each coordinate (6S)-5-formyl-5,6,7,8-tetrahydrofolate. The 162-residue stretch at 216–377 folds into the TrmE-type G domain; the sequence is GMKVVIAGRP…LRNHLKQSMG (162 aa). Residue asparagine 226 participates in K(+) binding. Residues 226–231, 245–251, 270–273, and 335–338 contribute to the GTP site; these read NAGKSS, TDIAGTT, DTAG, and NKAD. Mg(2+) is bound at residue serine 230. Residues threonine 245, isoleucine 247, and threonine 250 each contribute to the K(+) site. Threonine 251 contacts Mg(2+). A (6S)-5-formyl-5,6,7,8-tetrahydrofolate-binding site is contributed by lysine 454.

This sequence belongs to the TRAFAC class TrmE-Era-EngA-EngB-Septin-like GTPase superfamily. TrmE GTPase family. Homodimer. Heterotetramer of two MnmE and two MnmG subunits. Requires K(+) as cofactor.

Its subcellular location is the cytoplasm. Its function is as follows. Exhibits a very high intrinsic GTPase hydrolysis rate. Involved in the addition of a carboxymethylaminomethyl (cmnm) group at the wobble position (U34) of certain tRNAs, forming tRNA-cmnm(5)s(2)U34. This Escherichia coli O157:H7 protein is tRNA modification GTPase MnmE.